Reading from the N-terminus, the 192-residue chain is Orotate phosphoribosyltransferase 2 (192 aa).

116 to 124 (EDIVTTGLS) contributes to the 5-phospho-alpha-D-ribose 1-diphosphate binding site. Orotate contacts are provided by Thr-120 and Arg-148.

Belongs to the purine/pyrimidine phosphoribosyltransferase family. PyrE subfamily. In terms of assembly, homodimer. It depends on Mg(2+) as a cofactor.

It catalyses the reaction orotidine 5'-phosphate + diphosphate = orotate + 5-phospho-alpha-D-ribose 1-diphosphate. It functions in the pathway pyrimidine metabolism; UMP biosynthesis via de novo pathway; UMP from orotate: step 1/2. In terms of biological role, catalyzes the transfer of a ribosyl phosphate group from 5-phosphoribose 1-diphosphate to orotate, leading to the formation of orotidine monophosphate (OMP). This Mesorhizobium japonicum (strain LMG 29417 / CECT 9101 / MAFF 303099) (Mesorhizobium loti (strain MAFF 303099)) protein is Orotate phosphoribosyltransferase 2.